Here is a 92-residue protein sequence, read N- to C-terminus: MSRSVWKGPFVDSYVLKKAEASRESGRNEVIKIWSRRSTILPQFVGLTFGVYNGRKHIPVNITEDMIGQKFGEYSPTRTYYGHAADKKAKRK.

It belongs to the universal ribosomal protein uS19 family.

Its function is as follows. Protein S19 forms a complex with S13 that binds strongly to the 16S ribosomal RNA. This Roseobacter denitrificans (strain ATCC 33942 / OCh 114) (Erythrobacter sp. (strain OCh 114)) protein is Small ribosomal subunit protein uS19.